The chain runs to 426 residues: Tol-Pal system protein TolB (426 aa).

An N-terminal signal peptide occupies residues 1 to 25 (MSITPSLSRRTVMSLLAAGLSPAFA).

This sequence belongs to the TolB family. The Tol-Pal system is composed of five core proteins: the inner membrane proteins TolA, TolQ and TolR, the periplasmic protein TolB and the outer membrane protein Pal. They form a network linking the inner and outer membranes and the peptidoglycan layer.

It localises to the periplasm. Part of the Tol-Pal system, which plays a role in outer membrane invagination during cell division and is important for maintaining outer membrane integrity. This chain is Tol-Pal system protein TolB, found in Polaromonas sp. (strain JS666 / ATCC BAA-500).